A 185-amino-acid polypeptide reads, in one-letter code: Alkyl hydroperoxide reductase AhpD (185 aa).

Residue Cys131 is the Proton donor of the active site. A disulfide bridge connects residues Cys131 and Cys134. Cys134 functions as the Cysteine sulfenic acid (-SOH) intermediate in the catalytic mechanism.

Belongs to the AhpD family. In terms of assembly, homotrimer.

It catalyses the reaction N(6)-[(R)-dihydrolipoyl]-L-lysyl-[lipoyl-carrier protein] + a hydroperoxide = N(6)-[(R)-lipoyl]-L-lysyl-[lipoyl-carrier protein] + an alcohol + H2O. Antioxidant protein with alkyl hydroperoxidase activity. Required for the reduction of the AhpC active site cysteine residues and for the regeneration of the AhpC enzyme activity. The sequence is that of Alkyl hydroperoxide reductase AhpD from Frankia alni (strain DSM 45986 / CECT 9034 / ACN14a).